Reading from the N-terminus, the 97-residue chain is Putative septation protein SpoVG (97 aa).

Belongs to the SpoVG family.

Essential for sporulation. Interferes with or is a negative regulator of the pathway leading to asymmetric septation. This Bacillus cytotoxicus (strain DSM 22905 / CIP 110041 / 391-98 / NVH 391-98) protein is Putative septation protein SpoVG.